The chain runs to 100 residues: MKTYQEFIAEARVGAGKLEAAVNKKAHSFHDLPDKDRKKLVSLYIDRERILALPGANEGKQAKPLNAVEKKIDNFASKFGMSMDDLQQAAIEAAKAIKDK.

The propeptide occupies 1–10 (MKTYQEFIAE).

In terms of biological role, internal protein II, which has a histone-like character, binds weakly to other components of the assembly core during an early stage of bacteriophage head morphogenesis. This chain is Internal protein II (ipi2), found in Enterobacteria phage T4 (Bacteriophage T4).